The primary structure comprises 180 residues: Ribosome maturation factor RimM (180 aa).

The 73-residue stretch at 97-169 folds into the PRC barrel domain; sequence PGELSWDFFV…IITVDLPEGL (73 aa).

It belongs to the RimM family. As to quaternary structure, binds ribosomal protein uS19.

The protein resides in the cytoplasm. In terms of biological role, an accessory protein needed during the final step in the assembly of 30S ribosomal subunit, possibly for assembly of the head region. Essential for efficient processing of 16S rRNA. May be needed both before and after RbfA during the maturation of 16S rRNA. It has affinity for free ribosomal 30S subunits but not for 70S ribosomes. This chain is Ribosome maturation factor RimM, found in Bacteroides fragilis (strain YCH46).